The sequence spans 799 residues: Lon protease 4 (799 aa).

The Lon N-terminal domain occupies 15 to 204 (FPLLPLRTGV…RVAGLLAEAS (190 aa)). An ATP-binding site is contributed by 356-363 (GPPGVGKT). Positions 595–776 (TSVAGVATGL…SQVIAAALEE (182 aa)) constitute a Lon proteolytic domain. Residues S682 and K725 contribute to the active site.

The protein belongs to the peptidase S16 family. Homohexamer. Organized in a ring with a central cavity.

It is found in the cytoplasm. It carries out the reaction Hydrolysis of proteins in presence of ATP.. In terms of biological role, ATP-dependent serine protease that mediates the selective degradation of mutant and abnormal proteins as well as certain short-lived regulatory proteins. Required for cellular homeostasis and for survival from DNA damage and developmental changes induced by stress. Degrades polypeptides processively to yield small peptide fragments that are 5 to 10 amino acids long. Binds to DNA in a double-stranded, site-specific manner. This chain is Lon protease 4, found in Sorangium cellulosum (strain So ce56) (Polyangium cellulosum (strain So ce56)).